The following is a 1055-amino-acid chain: TNF receptor-associated factor homolog 1a (1055 aa).

The tract at residues 1-56 (MSESTNEDSGAGRSSLEENSNGQRSQSEEAIAEWRSSEQVENGTPSTSPPYWDIDD) is disordered. The segment covering 37 to 46 (SEQVENGTPS) has biased composition (polar residues). One can recognise an MATH domain in the interval 68–191 (FGKNTWTIEK…SGCLTIKAQV (124 aa)). Disordered stretches follow at residues 352-380 (PKKE…VERD), 431-590 (AESE…NGSY), 603-772 (FSNG…APII), and 820-845 (VGSS…SHPS). Positions 433 to 446 (SEQKGKRGASEKEK) are enriched in basic and acidic residues. The stretch at 441-496 (ASEKEKKSKKKQAKQKKNKNKGKEMRKEDKVRTQTEEREIEKEECVRAIAESSAEK) forms a coiled coil. Over residues 447-460 (KSKKKQAKQKKNKN) the composition is skewed to basic residues. Residues 461-486 (KGKEMRKEDKVRTQTEEREIEKEECV) are compositionally biased toward basic and acidic residues. The segment covering 502 to 513 (DVSDVSDSVDSS) has biased composition (low complexity). Basic and acidic residues predominate over residues 524-537 (RESSPVHWEMDASE). The segment covering 569 to 586 (MDDSSSTCSNDSIQSGVA) has biased composition (polar residues). The span at 657–668 (QKPESPKERSPV) shows a compositional bias: basic and acidic residues. 2 stretches are compositionally biased toward polar residues: residues 723–740 (KSPS…QLQT) and 823–845 (SGFT…SHPS).

As to quaternary structure, interacts with AHK3. Interacts with ATG6, SINAT1, SINAT2, SINAT5 and SINAT6.

It localises to the cytoplasm. In terms of biological role, functions redundantly with TRAF1B in the regulation of plant immune response. Contributes to the turnover of the nucleotide-binding domain and leucine-rich repeat-containing (NB-LRR) immune receptors SNC1 and RPS2. May associate with an E3 ubiquitin-protein ligase complex, which modulates ubiquitination and subsequent degradation of NB-LRR immune sensors to maintain their homeostasis. Functions redundantly with TRAF1B in the regulation of autophagosome formation. Required for SINAT1- and SINAT2-mediated ubiquitination and destabilization of ATG6. Functions as a molecular adapter that helps to regulate autophagy by modulating ATG6 stability. This chain is TNF receptor-associated factor homolog 1a, found in Arabidopsis thaliana (Mouse-ear cress).